A 108-amino-acid polypeptide reads, in one-letter code: Thiosulfate sulfurtransferase GlpE (108 aa).

The Rhodanese domain maps to 17-105; the sequence is QEKEAVLVDI…WQRQFPAEVA (89 aa). Residue C65 is the Cysteine persulfide intermediate of the active site.

The protein belongs to the GlpE family.

Its subcellular location is the cytoplasm. It carries out the reaction thiosulfate + hydrogen cyanide = thiocyanate + sulfite + 2 H(+). It catalyses the reaction thiosulfate + [thioredoxin]-dithiol = [thioredoxin]-disulfide + hydrogen sulfide + sulfite + 2 H(+). Its function is as follows. Transferase that catalyzes the transfer of sulfur from thiosulfate to thiophilic acceptors such as cyanide or dithiols. May function in a CysM-independent thiosulfate assimilation pathway by catalyzing the conversion of thiosulfate to sulfite, which can then be used for L-cysteine biosynthesis. This is Thiosulfate sulfurtransferase GlpE from Escherichia coli O139:H28 (strain E24377A / ETEC).